The primary structure comprises 64 residues: Prokaryotic ubiquitin-like protein Pup (64 aa).

Basic and acidic residues-rich tracts occupy residues 1 to 11 (MAQEQTKRTGG) and 25 to 34 (GQERREKLAE). The segment at 1-38 (MAQEQTKRTGGGDEDEGSAGPEAAGQERREKLAEDTDD) is disordered. The tract at residues 21–58 (PEAAGQERREKLAEDTDDLLDEIDDVLEENAEDFVRAY) is ARC ATPase binding. Residues 24-52 (AGQERREKLAEDTDDLLDEIDDVLEENAE) are a coiled coil. Glutamine 64 carries the deamidated glutamine modification. Residue glutamine 64 forms an Isoglutamyl lysine isopeptide (Gln-Lys) (interchain with K-? in acceptor proteins) linkage.

It belongs to the prokaryotic ubiquitin-like protein family. Strongly interacts with the proteasome-associated ATPase ARC through a hydrophobic interface; the interacting region of Pup lies in its C-terminal half. There is one Pup binding site per ARC hexamer ring. Post-translationally, is modified by deamidation of its C-terminal glutamine to glutamate by the deamidase Dop, a prerequisite to the subsequent pupylation process.

It functions in the pathway protein degradation; proteasomal Pup-dependent pathway. In terms of biological role, protein modifier that is covalently attached to lysine residues of substrate proteins, thereby targeting them for proteasomal degradation. The tagging system is termed pupylation. This is Prokaryotic ubiquitin-like protein Pup from Nocardia farcinica (strain IFM 10152).